Here is a 473-residue protein sequence, read N- to C-terminus: Rifampicin monooxygenase (473 aa).

4 residues coordinate FAD: T12, E31, K32, and R41. R43 is a rifampicin binding site. FAD is bound by residues Q98, V122, and T156. Residue R196 participates in rifampicin binding. D276 is a binding site for FAD. G285 contributes to the rifampicin binding site. FAD is bound by residues L289 and N290.

This sequence belongs to the rifampicin monooxygenase family. In terms of assembly, homodimer. The cofactor is FAD.

The enzyme catalyses rifampicin + NADPH + O2 = rifampicin para-naphthoquinone carboxamide + NADP(+) + H2O + H(+). The catalysed reaction is rifampicin + NADH + O2 = rifampicin para-naphthoquinone carboxamide + NAD(+) + H2O + H(+). Its function is as follows. Monooxygenase that can modify rifampicin, thereby inactivating its antibiotic activity. It constitutes a secondary rifampicin resistance factor. This chain is Rifampicin monooxygenase, found in Nocardia farcinica (strain IFM 10152).